We begin with the raw amino-acid sequence, 55 residues long: Large ribosomal subunit protein bL33 (55 aa).

It belongs to the bacterial ribosomal protein bL33 family.

The sequence is that of Large ribosomal subunit protein bL33 from Gluconobacter oxydans (strain 621H) (Gluconobacter suboxydans).